Here is a 481-residue protein sequence, read N- to C-terminus: Delta 4,5-hexuronate-2-O-sulfatase (481 aa).

At serine 64 the chain carries 3-oxoalanine (Ser). Zn(2+) is bound by residues cysteine 225, cysteine 226, histidine 462, and histidine 469. The segment at 453–481 (VDADPRCRNHTPGYPSHEGPGAREILKRK) is disordered. Positions 472-481 (PGAREILKRK) are enriched in basic and acidic residues.

It belongs to the sulfatase family. It depends on Zn(2+) as a cofactor. In terms of processing, the conversion to 3-oxoalanine (also known as C-formylglycine, FGly), of a serine or cysteine residue in prokaryotes and of a cysteine residue in eukaryotes, is critical for catalytic activity.

Functionally, exosulfatase involved in the degradation of the glycosaminoglycans (GAGs) chondroitin sulfate (CS), dermatan sulfate (DS) and heparan sulfate (HS). 2-O-sulfatase active on unsaturated non-reducing end hexuronate units. Has a slight preference for HS-derived structures. GAG-specific sulfatases play a key role in the persistence of the major human gut symbiont B.thetaiotaomicron in the host gastrointestinal tract. This is Delta 4,5-hexuronate-2-O-sulfatase from Bacteroides thetaiotaomicron (strain ATCC 29148 / DSM 2079 / JCM 5827 / CCUG 10774 / NCTC 10582 / VPI-5482 / E50).